A 193-amino-acid polypeptide reads, in one-letter code: Thymidine kinase (193 aa).

Residues 14–21 and 87–90 contribute to the ATP site; these read GCMFSGKT and DELH. Residue glutamate 88 is the Proton acceptor of the active site. Residues cysteine 147, cysteine 150, cysteine 185, and cysteine 188 each coordinate Zn(2+).

This sequence belongs to the thymidine kinase family. As to quaternary structure, homotetramer.

It is found in the cytoplasm. It catalyses the reaction thymidine + ATP = dTMP + ADP + H(+). The polypeptide is Thymidine kinase (Roseiflexus sp. (strain RS-1)).